We begin with the raw amino-acid sequence, 137 residues long: uncharacterized protein (137 aa).

This is an uncharacterized protein from Bos taurus (Bovine).